A 52-amino-acid polypeptide reads, in one-letter code: UPF0181 protein HD_1137 (52 aa).

This sequence belongs to the UPF0181 family.

In Haemophilus ducreyi (strain 35000HP / ATCC 700724), this protein is UPF0181 protein HD_1137.